The following is a 66-amino-acid chain: DNA gyrase inhibitor YacG (66 aa).

Zn(2+) is bound by residues Cys-9, Cys-12, Cys-28, and Cys-32.

This sequence belongs to the DNA gyrase inhibitor YacG family. As to quaternary structure, interacts with GyrB. Zn(2+) is required as a cofactor.

Functionally, inhibits all the catalytic activities of DNA gyrase by preventing its interaction with DNA. Acts by binding directly to the C-terminal domain of GyrB, which probably disrupts DNA binding by the gyrase. This is DNA gyrase inhibitor YacG from Pseudomonas aeruginosa (strain LESB58).